Reading from the N-terminus, the 315-residue chain is 4-hydroxy-3-methylbut-2-enyl diphosphate reductase (315 aa).

Cysteine 12 is a [4Fe-4S] cluster binding site. (2E)-4-hydroxy-3-methylbut-2-enyl diphosphate is bound by residues histidine 41 and histidine 74. Dimethylallyl diphosphate contacts are provided by histidine 41 and histidine 74. Isopentenyl diphosphate contacts are provided by histidine 41 and histidine 74. Residue cysteine 96 coordinates [4Fe-4S] cluster. Histidine 124 provides a ligand contact to (2E)-4-hydroxy-3-methylbut-2-enyl diphosphate. Histidine 124 provides a ligand contact to dimethylallyl diphosphate. Histidine 124 is a binding site for isopentenyl diphosphate. Residue glutamate 126 is the Proton donor of the active site. Threonine 168 provides a ligand contact to (2E)-4-hydroxy-3-methylbut-2-enyl diphosphate. Residue cysteine 198 coordinates [4Fe-4S] cluster. (2E)-4-hydroxy-3-methylbut-2-enyl diphosphate is bound by residues serine 226, serine 227, asparagine 228, and serine 270. Serine 226, serine 227, asparagine 228, and serine 270 together coordinate dimethylallyl diphosphate. Isopentenyl diphosphate contacts are provided by serine 226, serine 227, asparagine 228, and serine 270.

Belongs to the IspH family. [4Fe-4S] cluster serves as cofactor.

The catalysed reaction is isopentenyl diphosphate + 2 oxidized [2Fe-2S]-[ferredoxin] + H2O = (2E)-4-hydroxy-3-methylbut-2-enyl diphosphate + 2 reduced [2Fe-2S]-[ferredoxin] + 2 H(+). It carries out the reaction dimethylallyl diphosphate + 2 oxidized [2Fe-2S]-[ferredoxin] + H2O = (2E)-4-hydroxy-3-methylbut-2-enyl diphosphate + 2 reduced [2Fe-2S]-[ferredoxin] + 2 H(+). It functions in the pathway isoprenoid biosynthesis; dimethylallyl diphosphate biosynthesis; dimethylallyl diphosphate from (2E)-4-hydroxy-3-methylbutenyl diphosphate: step 1/1. The protein operates within isoprenoid biosynthesis; isopentenyl diphosphate biosynthesis via DXP pathway; isopentenyl diphosphate from 1-deoxy-D-xylulose 5-phosphate: step 6/6. In terms of biological role, catalyzes the conversion of 1-hydroxy-2-methyl-2-(E)-butenyl 4-diphosphate (HMBPP) into a mixture of isopentenyl diphosphate (IPP) and dimethylallyl diphosphate (DMAPP). Acts in the terminal step of the DOXP/MEP pathway for isoprenoid precursor biosynthesis. The protein is 4-hydroxy-3-methylbut-2-enyl diphosphate reductase of Azotobacter vinelandii (strain DJ / ATCC BAA-1303).